The sequence spans 2193 residues: Highly reducing polyketide synthase VdtX (2193 aa).

The Ketosynthase family 3 (KS3) domain occupies 1-417 (MAICGIAVRL…GVNAHVIIES (417 aa)). Residues Cys-170, His-306, and His-340 each act as for beta-ketoacyl synthase activity in the active site. Residues 513-809 (VFAGQGAQWP…HPYVPCLIRF (297 aa)) are malonyl-CoA:ACP transacylase (MAT) domain. The interval 877 to 1001 (HELLGTRVVD…GEVAQENLSR (125 aa)) is N-terminal hotdog fold. A dehydratase (DH) domain region spans residues 877–1128 (HELLGTRVVD…DIVLRPLGAN (252 aa)). The PKS/mFAS DH domain occupies 877 to 1202 (HELLGTRVVD…LQRQPKPSSE (326 aa)). His-909 serves as the catalytic Proton acceptor; for dehydratase activity. Residues 1032–1202 (SVTSNTVSGR…LQRQPKPSSE (171 aa)) are C-terminal hotdog fold. Asp-1093 serves as the catalytic Proton donor; for dehydratase activity. The segment at 1256–1390 (NYLNEPQQRI…DRWDSILKAA (135 aa)) is methyltransferase (CMet) domain. An enoyl reductase (ER) domain region spans residues 1575–1783 (GQQVQLLGDD…SGQHIGQLRL (209 aa)). A ketoreductase (KR) domain region spans residues 1807–1981 (ASYLLVGGLG…ASVIDIGEVQ (175 aa)). Residues 2102 to 2183 (PSATQFVSLE…AMGEHVIREL (82 aa)) form the Carrier domain. Position 2143 is an O-(pantetheine 4'-phosphoryl)serine (Ser-2143).

In terms of biological role, highly reducing polyketide synthase; part of the gene cluster that mediates the biosynthesis of viriditoxin, one of the 'classical' secondary metabolites produced by fungi and that has antibacterial activity. The first step is performed by the polyketide synthase VdtA which condenses one acetyl-CoA and 6 malonyl-CoA units to form the heptaketide monomer backbone of viriditoxin. The product of VdtA is then O-methylated on C7 by the O-methyltransferase VdtC. The O-methyl group is important for the stereoselective coupling of the monomers at the final step of viriditoxin biosynthesis. The short-chain dehydrogenase/reductase VdtF is involved in the reduction of the C3-C4 double bond. The FAD-binding monooxygenase VdtE then converts the ketone group into a methyl-ester group to yield semi-viriditoxin. Finally, the laccase VdtB is involved in dimerization of 2 semi-viriditoxin molecules to yield the final viriditoxin. The non-catalytic carboxylesterase-like protein VdtD affects the stereochemistical outcome of the coupling. The highly reducing polyketide synthase VdtX is not involved in viriditoxin synthesis, but might possibly play a role in the production of additional metabolites not identified yet. The sequence is that of Highly reducing polyketide synthase VdtX from Byssochlamys spectabilis (Paecilomyces variotii).